The chain runs to 206 residues: Pyridoxine/pyridoxamine 5'-phosphate oxidase (206 aa).

FMN is bound by residues 53-58 (RMVLLK), 68-69 (YT), K75, and Q97. K58 lines the substrate pocket. Substrate-binding residues include Y115, R119, and S123. FMN-binding positions include 132–133 (QS) and W177. Substrate is bound at residue 183–185 (RLH). R187 is an FMN binding site.

Belongs to the pyridoxamine 5'-phosphate oxidase family. Homodimer. Requires FMN as cofactor.

It carries out the reaction pyridoxamine 5'-phosphate + O2 + H2O = pyridoxal 5'-phosphate + H2O2 + NH4(+). The catalysed reaction is pyridoxine 5'-phosphate + O2 = pyridoxal 5'-phosphate + H2O2. It participates in cofactor metabolism; pyridoxal 5'-phosphate salvage; pyridoxal 5'-phosphate from pyridoxamine 5'-phosphate: step 1/1. The protein operates within cofactor metabolism; pyridoxal 5'-phosphate salvage; pyridoxal 5'-phosphate from pyridoxine 5'-phosphate: step 1/1. Its function is as follows. Catalyzes the oxidation of either pyridoxine 5'-phosphate (PNP) or pyridoxamine 5'-phosphate (PMP) into pyridoxal 5'-phosphate (PLP). This chain is Pyridoxine/pyridoxamine 5'-phosphate oxidase, found in Rhizobium etli (strain CIAT 652).